A 1285-amino-acid polypeptide reads, in one-letter code: Peroxisomal ATPase PEX1 (1285 aa).

Polar residues predominate over residues 344–353 (QQGKTKQSVM). Residues 344–373 (QQGKTKQSVMSPEKEKHPLESPNHKQIGSD) form a disordered region. Phosphoserine is present on Ser354. Residues 355–373 (PEKEKHPLESPNHKQIGSD) show a composition bias toward basic and acidic residues. Residues 601–608 (GGKGSGKS) and 883–890 (GPPGTGKT) each bind ATP. Residues 1142 to 1161 (NGTSSDLSSQCPSAPSSVTQ) show a composition bias toward polar residues. The disordered stretch occupies residues 1142–1162 (NGTSSDLSSQCPSAPSSVTQD). A phosphoserine mark is found at Ser1183, Ser1211, and Ser1213. Positions 1262 to 1285 (FQNPKKRKNPSGTVFRPGQKVTLA) are disordered.

The protein belongs to the AAA ATPase family. Homooligomer; homooligomerizes in the cytosol, interaction with PEX6 promotes dissociation of the homooligomer. Interacts with PEX6; forming the PEX1-PEX6 AAA ATPase complex, which is composed of a heterohexamer formed by a trimer of PEX1-PEX6 dimers. Interacts indirectly with PEX26, via its interaction with PEX6.

It is found in the cytoplasm. The protein localises to the cytosol. The protein resides in the peroxisome membrane. The catalysed reaction is ATP + H2O = ADP + phosphate + H(+). Its function is as follows. Component of the PEX1-PEX6 AAA ATPase complex, a protein dislocase complex that mediates the ATP-dependent extraction of the PEX5 receptor from peroxisomal membranes, an essential step for PEX5 recycling. Specifically recognizes PEX5 monoubiquitinated at 'Cys-11', and pulls it out of the peroxisome lumen through the PEX2-PEX10-PEX12 retrotranslocation channel. Extraction by the PEX1-PEX6 AAA ATPase complex is accompanied by unfolding of the TPR repeats and release of bound cargo from PEX5. The chain is Peroxisomal ATPase PEX1 from Cricetulus griseus (Chinese hamster).